The following is a 294-amino-acid chain: UDP-3-O-acyl-N-acetylglucosamine deacetylase (294 aa).

Residues H75, H232, and D236 each coordinate Zn(2+). The Proton donor role is filled by H259.

The protein belongs to the LpxC family. The cofactor is Zn(2+).

The catalysed reaction is a UDP-3-O-[(3R)-3-hydroxyacyl]-N-acetyl-alpha-D-glucosamine + H2O = a UDP-3-O-[(3R)-3-hydroxyacyl]-alpha-D-glucosamine + acetate. It functions in the pathway glycolipid biosynthesis; lipid IV(A) biosynthesis; lipid IV(A) from (3R)-3-hydroxytetradecanoyl-[acyl-carrier-protein] and UDP-N-acetyl-alpha-D-glucosamine: step 2/6. Its function is as follows. Catalyzes the hydrolysis of UDP-3-O-myristoyl-N-acetylglucosamine to form UDP-3-O-myristoylglucosamine and acetate, the committed step in lipid A biosynthesis. The protein is UDP-3-O-acyl-N-acetylglucosamine deacetylase of Campylobacter jejuni subsp. jejuni serotype O:6 (strain 81116 / NCTC 11828).